The primary structure comprises 470 residues: Ribulose bisphosphate carboxylase large chain (470 aa).

2 residues coordinate substrate: Asn-115 and Thr-165. Lys-167 acts as the Proton acceptor in catalysis. Lys-169 provides a ligand contact to substrate. 3 residues coordinate Mg(2+): Lys-193, Asp-195, and Glu-196. The residue at position 193 (Lys-193) is an N6-carboxylysine. Catalysis depends on His-286, which acts as the Proton acceptor. Substrate is bound by residues Arg-287, His-319, and Ser-371.

It belongs to the RuBisCO large chain family. Type I subfamily. Heterohexadecamer of 8 large chains and 8 small chains. The cofactor is Mg(2+).

It localises to the carboxysome. The catalysed reaction is 2 (2R)-3-phosphoglycerate + 2 H(+) = D-ribulose 1,5-bisphosphate + CO2 + H2O. It carries out the reaction D-ribulose 1,5-bisphosphate + O2 = 2-phosphoglycolate + (2R)-3-phosphoglycerate + 2 H(+). Functionally, ruBisCO catalyzes two reactions: the carboxylation of D-ribulose 1,5-bisphosphate, the primary event in carbon dioxide fixation, as well as the oxidative fragmentation of the pentose substrate in the photorespiration process. Both reactions occur simultaneously and in competition at the same active site. This is Ribulose bisphosphate carboxylase large chain from Synechococcus sp. (strain CC9902).